Consider the following 711-residue polypeptide: Nuclear intron maturase 1, mitochondrial (711 aa).

A Reverse transcriptase domain is found at 147 to 459; that stretch reads KDKISMNGGE…RGIQFLDHII (313 aa). The interval 484-653 is intron maturase type-2; that stretch reads GTLLSVSASL…QVLQEYIRLQ (170 aa).

The protein belongs to the plant nuclear intron maturase (nMat) family. In terms of tissue distribution, expressed at low levels in seedlings and accumulates in adult plants.

Its subcellular location is the mitochondrion. Its function is as follows. Nuclear-encoded maturase required for splicing of group-II introns in mitochondria. Necessary for mitochondrial biogenesis during early developmental stages. Involved in the splicing of mitochondrial NAD4 transcripts. Required for trans-splicing of NAD1 intron 1 and also functions in cis-splicing of NAD2 intron 1 and NAD4 intron 2. Required for the regulation of fundamental metabolic pathways such as amino acid metabolism, triacylglycerol degradation and polysaccharide synthesis (cellulose and starch) during the early stage of plant growth. Implicated in stress responses. The chain is Nuclear intron maturase 1, mitochondrial from Arabidopsis thaliana (Mouse-ear cress).